The following is a 277-amino-acid chain: R-spondin-3 (277 aa).

The first 21 residues, 1-21 (MHLRLISCFFIILNFMEYIGS), serve as a signal peptide directing secretion. 2 FU repeats span residues 35–86 (PNVS…GYYG) and 92–135 (INKC…GLEA). The N-linked (GlcNAc...) asparagine glycan is linked to Asn-36. Cystine bridges form between Cys-41–Cys-48, Cys-45–Cys-54, Cys-57–Cys-76, Cys-80–Cys-95, Cys-98–Cys-105, Cys-102–Cys-111, Cys-114–Cys-125, Cys-129–Cys-142, Cys-148–Cys-190, Cys-159–Cys-166, and Cys-199–Cys-206. Residues 147-207 (HCEASEWSPW…TCIVQRKKCS (61 aa)) form the TSP type-1 domain. Positions 210-277 (ERGKKGRERK…QKSVSVSTVH (68 aa)) are disordered. Over residues 213–223 (KKGRERKRKKL) the composition is skewed to basic residues. The span at 232 to 245 (SSSSDSKGLESSIE) shows a compositional bias: low complexity.

It belongs to the R-spondin family. In terms of assembly, interacts with the extracellular domain of FZD8 and LRP6. It however does not form a ternary complex with FZD8 and LRP6. Interacts with WNT1. Binds heparin. Interacts with LGR4, LGR5 and LGR6. Highly expressed in endothelial cells.

Its subcellular location is the secreted. Functionally, activator of the canonical Wnt signaling pathway by acting as a ligand for LGR4-6 receptors, which acts as a key regulator of angiogenesis. Upon binding to LGR4-6 (LGR4, LGR5 or LGR6), LGR4-6 associate with phosphorylated LRP6 and frizzled receptors that are activated by extracellular Wnt receptors, triggering the canonical Wnt signaling pathway to increase expression of target genes. Also regulates the canonical Wnt/beta-catenin-dependent pathway and non-canonical Wnt signaling by acting as an inhibitor of ZNRF3, an important regulator of the Wnt signaling pathway. Acts as a ligand for frizzled FZD8 and LRP6. May negatively regulate the TGF-beta pathway. Acts as a key regulator of angiogenesis by controlling vascular stability and pruning: acts by activating the non-canonical Wnt signaling pathway in endothelial cells. Can also amplify Wnt signaling pathway independently of LGR4-6 receptors, possibly by acting as a direct antagonistic ligand to RNF43 and ZNRF3. This Mus musculus (Mouse) protein is R-spondin-3 (Rspo3).